The chain runs to 218 residues: Small ribosomal subunit protein uS7m (218 aa).

The N-terminal 19 residues, 1 to 19 (MSLLGRIAEKTSRLSCLRL), are a transit peptide targeting the mitochondrion.

The protein belongs to the universal ribosomal protein uS7 family. In terms of assembly, component of the mitochondrial ribosome small subunit (28S) which comprises a 12S rRNA and about 30 distinct proteins.

The protein localises to the mitochondrion. The sequence is that of Small ribosomal subunit protein uS7m (mRpS7) from Drosophila melanogaster (Fruit fly).